Consider the following 510-residue polypeptide: NAD(P)H-quinone oxidoreductase subunit 2 A, chloroplastic (510 aa).

13 helical membrane-spanning segments follow: residues 24–44 (LLLFHGSFIFPECILIFGLIL), 59–79 (WFYFISSTSLVMSITALLFRW), 99–119 (IFQFLILLCSTLCIPLSVEYI), 124–144 (MAITEFLLFVLTATLGGMFLC), 149–169 (LITIFVAPECFSLCSYLLSGY), 183–203 (YLLMGGASSSILVHGFSWLYG), 229–249 (ISIALLSITVGIGFKLSPAPF), 295–315 (WHLLLEILAILSMILGNLIAI), 323–343 (MLAYSSIGQIGYVIIGIIVGD), 347–367 (GYASMITYMLFYISMNLGTFA), 395–415 (ALSSALCLLSLGGIPPLAGFF), 418–438 (LHLFWCGWQAGLYFLVSIGLL), and 484–504 (MIVCVIASTIPGISMNPIIAI).

The protein belongs to the complex I subunit 2 family. As to quaternary structure, NDH is composed of at least 16 different subunits, 5 of which are encoded in the nucleus.

It localises to the plastid. The protein localises to the chloroplast thylakoid membrane. It carries out the reaction a plastoquinone + NADH + (n+1) H(+)(in) = a plastoquinol + NAD(+) + n H(+)(out). The enzyme catalyses a plastoquinone + NADPH + (n+1) H(+)(in) = a plastoquinol + NADP(+) + n H(+)(out). NDH shuttles electrons from NAD(P)H:plastoquinone, via FMN and iron-sulfur (Fe-S) centers, to quinones in the photosynthetic chain and possibly in a chloroplast respiratory chain. The immediate electron acceptor for the enzyme in this species is believed to be plastoquinone. Couples the redox reaction to proton translocation, and thus conserves the redox energy in a proton gradient. The polypeptide is NAD(P)H-quinone oxidoreductase subunit 2 A, chloroplastic (Amborella trichopoda).